The primary structure comprises 345 residues: D-fructose 1,6-bisphosphatase class 2/sedoheptulose 1,7-bisphosphatase (345 aa).

Asp33, Glu57, Asp97, and Glu100 together coordinate Mn(2+). Substrate-binding positions include 100 to 102 (EGT), Tyr131, 176 to 178 (RDR), and 198 to 200 (DGD). Glu225 is a Mn(2+) binding site.

This sequence belongs to the FBPase class 2 family. In terms of assembly, homotetramer. Requires Mn(2+) as cofactor.

It catalyses the reaction beta-D-fructose 1,6-bisphosphate + H2O = beta-D-fructose 6-phosphate + phosphate. The enzyme catalyses D-sedoheptulose 1,7-bisphosphate + H2O = D-sedoheptulose 7-phosphate + phosphate. The protein operates within carbohydrate biosynthesis; Calvin cycle. Its function is as follows. Catalyzes the hydrolysis of fructose 1,6-bisphosphate (Fru 1,6-P2) and sedoheptulose 1,7-bisphosphate (Sed 1,7-P2) to fructose 6-phosphate and sedoheptulose 7-phosphate, respectively. The protein is D-fructose 1,6-bisphosphatase class 2/sedoheptulose 1,7-bisphosphatase of Nostoc sp. (strain PCC 7120 / SAG 25.82 / UTEX 2576).